The following is a 398-amino-acid chain: Succinyl-diaminopimelate desuccinylase (398 aa).

His68 lines the Zn(2+) pocket. Asp70 is a catalytic residue. Zn(2+) is bound at residue Asp101. The Proton acceptor role is filled by Glu135. Zn(2+) contacts are provided by Glu136, Glu164, and His349.

It belongs to the peptidase M20A family. DapE subfamily. In terms of assembly, homodimer. It depends on Zn(2+) as a cofactor. Co(2+) is required as a cofactor.

The enzyme catalyses N-succinyl-(2S,6S)-2,6-diaminopimelate + H2O = (2S,6S)-2,6-diaminopimelate + succinate. It participates in amino-acid biosynthesis; L-lysine biosynthesis via DAP pathway; LL-2,6-diaminopimelate from (S)-tetrahydrodipicolinate (succinylase route): step 3/3. Its function is as follows. Catalyzes the hydrolysis of N-succinyl-L,L-diaminopimelic acid (SDAP), forming succinate and LL-2,6-diaminopimelate (DAP), an intermediate involved in the bacterial biosynthesis of lysine and meso-diaminopimelic acid, an essential component of bacterial cell walls. The sequence is that of Succinyl-diaminopimelate desuccinylase from Wolbachia pipientis wMel.